Here is a 361-residue protein sequence, read N- to C-terminus: Protein TIFY 8 (361 aa).

4 disordered regions span residues Asn53–Ser78, Arg113–Thr134, Gln190–Leu232, and Ser268–Thr361. Over residues Ala56–Ser78 the composition is skewed to low complexity. Composition is skewed to polar residues over residues Arg113–Thr127 and Ser208–Leu232. The Tify domain occupies Leu232 to Ser267. Positions Gly333–Thr361 are enriched in basic and acidic residues.

This sequence belongs to the TIFY/JAZ family. In terms of assembly, interacts with AFPH2/NINJA. Ubiquitinated. Targeted for degradation by the SCF(COI1) E3 ubiquitin ligase-proteasome pathway during jasmonate signaling.

It localises to the nucleus. Its function is as follows. Repressor of jasmonate responses. In Arabidopsis thaliana (Mouse-ear cress), this protein is Protein TIFY 8.